The following is a 153-amino-acid chain: Ribosome maturation factor RimP (153 aa).

Belongs to the RimP family.

The protein resides in the cytoplasm. Required for maturation of 30S ribosomal subunits. The chain is Ribosome maturation factor RimP from Clostridium botulinum (strain Okra / Type B1).